The sequence spans 489 residues: Ketol-acid reductoisomerase (NADP(+)) (489 aa).

The KARI N-terminal Rossmann domain occupies 16–207; sequence LRKCKLVEKN…GSHRAGVLHS (192 aa). NADP(+) is bound by residues 44–47, Arg-67, Ser-77, and 107–109; these read CGSQ and DKQ. His-131 is a catalytic residue. Gly-157 contributes to the NADP(+) binding site. 2 KARI C-terminal knotted domains span residues 208 to 343 and 344 to 483; these read SFIA…KCKI and CHKE…MVDM. Residues Asp-216, Glu-220, Glu-388, and Glu-392 each coordinate Mg(2+). Ser-413 is a binding site for substrate.

Belongs to the ketol-acid reductoisomerase family. Requires Mg(2+) as cofactor.

The catalysed reaction is (2R)-2,3-dihydroxy-3-methylbutanoate + NADP(+) = (2S)-2-acetolactate + NADPH + H(+). It carries out the reaction (2R,3R)-2,3-dihydroxy-3-methylpentanoate + NADP(+) = (S)-2-ethyl-2-hydroxy-3-oxobutanoate + NADPH + H(+). It participates in amino-acid biosynthesis; L-isoleucine biosynthesis; L-isoleucine from 2-oxobutanoate: step 2/4. The protein operates within amino-acid biosynthesis; L-valine biosynthesis; L-valine from pyruvate: step 2/4. Functionally, involved in the biosynthesis of branched-chain amino acids (BCAA). Catalyzes an alkyl-migration followed by a ketol-acid reduction of (S)-2-acetolactate (S2AL) to yield (R)-2,3-dihydroxy-isovalerate. In the isomerase reaction, S2AL is rearranged via a Mg-dependent methyl migration to produce 3-hydroxy-3-methyl-2-ketobutyrate (HMKB). In the reductase reaction, this 2-ketoacid undergoes a metal-dependent reduction by NADPH to yield (R)-2,3-dihydroxy-isovalerate. The chain is Ketol-acid reductoisomerase (NADP(+)) from Buchnera aphidicola subsp. Schlechtendalia chinensis.